Here is a 443-residue protein sequence, read N- to C-terminus: Cobyrinate a,c-diamide synthase (443 aa).

The region spanning 248–433 (KIAVAYDKAF…LHNHAVANPY (186 aa)) is the GATase cobBQ-type domain. The active-site Nucleophile is Cys327.

This sequence belongs to the CobB/CbiA family. The cofactor is Mg(2+).

The enzyme catalyses cob(II)yrinate + 2 L-glutamine + 2 ATP + 2 H2O = cob(II)yrinate a,c diamide + 2 L-glutamate + 2 ADP + 2 phosphate + 2 H(+). The catalysed reaction is Ni-sirohydrochlorin + 2 L-glutamine + 2 ATP + 2 H2O = Ni-sirohydrochlorin a,c-diamide + 2 L-glutamate + 2 ADP + 2 phosphate + 2 H(+). It functions in the pathway cofactor biosynthesis; adenosylcobalamin biosynthesis; cob(II)yrinate a,c-diamide from sirohydrochlorin (anaerobic route): step 10/10. In terms of biological role, catalyzes the ATP-dependent amidation of the two carboxylate groups at positions a and c of cobyrinate, using either L-glutamine or ammonia as the nitrogen source. Involved in the biosynthesis of the unique nickel-containing tetrapyrrole coenzyme F430, the prosthetic group of methyl-coenzyme M reductase (MCR), which plays a key role in methanogenesis and anaerobic methane oxidation. Catalyzes the ATP-dependent amidation of the two carboxylate groups at positions a and c of Ni-sirohydrochlorin, using L-glutamine or ammonia as the nitrogen source. The chain is Cobyrinate a,c-diamide synthase from Methanocaldococcus jannaschii (strain ATCC 43067 / DSM 2661 / JAL-1 / JCM 10045 / NBRC 100440) (Methanococcus jannaschii).